The chain runs to 214 residues: FMN-dependent NADH:quinone oxidoreductase 1 (214 aa).

Residues 17-19 (SWS) and 144-147 (SAGG) each bind FMN.

Belongs to the azoreductase type 1 family. In terms of assembly, homodimer. The cofactor is FMN.

The enzyme catalyses 2 a quinone + NADH + H(+) = 2 a 1,4-benzosemiquinone + NAD(+). It carries out the reaction N,N-dimethyl-1,4-phenylenediamine + anthranilate + 2 NAD(+) = 2-(4-dimethylaminophenyl)diazenylbenzoate + 2 NADH + 2 H(+). Its function is as follows. Quinone reductase that provides resistance to thiol-specific stress caused by electrophilic quinones. Functionally, also exhibits azoreductase activity. Catalyzes the reductive cleavage of the azo bond in aromatic azo compounds to the corresponding amines. This Lactococcus lactis subsp. lactis (strain IL1403) (Streptococcus lactis) protein is FMN-dependent NADH:quinone oxidoreductase 1.